We begin with the raw amino-acid sequence, 270 residues long: ATP synthase subunit a (270 aa).

5 consecutive transmembrane segments (helical) span residues 37-57 (NVHI…LWVF), 98-118 (IAPL…MDLV), 143-163 (DVNI…YYSI), 217-237 (VVFI…GALP), and 239-259 (AIFH…LTIV).

This sequence belongs to the ATPase A chain family. F-type ATPases have 2 components, CF(1) - the catalytic core - and CF(0) - the membrane proton channel. CF(1) has five subunits: alpha(3), beta(3), gamma(1), delta(1), epsilon(1). CF(0) has three main subunits: a(1), b(2) and c(9-12). The alpha and beta chains form an alternating ring which encloses part of the gamma chain. CF(1) is attached to CF(0) by a central stalk formed by the gamma and epsilon chains, while a peripheral stalk is formed by the delta and b chains.

The protein localises to the cell inner membrane. Functionally, key component of the proton channel; it plays a direct role in the translocation of protons across the membrane. This is ATP synthase subunit a from Aliivibrio fischeri (strain ATCC 700601 / ES114) (Vibrio fischeri).